The primary structure comprises 454 residues: CCA-adding enzyme (454 aa).

Residues Ser-53 and Lys-56 each contribute to the ATP site. Residues Ser-53 and Lys-56 each coordinate CTP. 3 residues coordinate Mg(2+): Asp-65, Asp-67, and Asp-119. ATP is bound by residues His-142, Lys-161, and Tyr-170. CTP-binding residues include His-142, Lys-161, and Tyr-170.

Belongs to the tRNA nucleotidyltransferase/poly(A) polymerase family. Archaeal CCA-adding enzyme subfamily. Homodimer. Mg(2+) is required as a cofactor.

It catalyses the reaction a tRNA precursor + 2 CTP + ATP = a tRNA with a 3' CCA end + 3 diphosphate. The enzyme catalyses a tRNA with a 3' CCA end + 2 CTP + ATP = a tRNA with a 3' CCACCA end + 3 diphosphate. Its function is as follows. Catalyzes the addition and repair of the essential 3'-terminal CCA sequence in tRNAs without using a nucleic acid template. Adds these three nucleotides in the order of C, C, and A to the tRNA nucleotide-73, using CTP and ATP as substrates and producing inorganic pyrophosphate. tRNA 3'-terminal CCA addition is required both for tRNA processing and repair. Also involved in tRNA surveillance by mediating tandem CCA addition to generate a CCACCA at the 3' terminus of unstable tRNAs. While stable tRNAs receive only 3'-terminal CCA, unstable tRNAs are marked with CCACCA and rapidly degraded. This chain is CCA-adding enzyme, found in Thermococcus gammatolerans (strain DSM 15229 / JCM 11827 / EJ3).